Reading from the N-terminus, the 377-residue chain is Ipis-1 (377 aa).

N-linked (GlcNAc...) asparagine glycans are attached at residues asparagine 11 and asparagine 226.

This sequence belongs to the serpin family. In terms of tissue distribution, female salivary gland. Not detected in midgut and other tissues.

It localises to the secreted. Salivary protein with immunosuppressive properties that can modulate blood feeding of ticks on vertebrate species. Inhibits proliferation of bovine peripheral blood mononuclear cells (PBMCs). Inhibits IFN-gamma (IFNG) production by bovine PBMCs. The sequence is that of Ipis-1 from Ixodes persulcatus (Taiga tick).